The following is a 307-amino-acid chain: Elongation factor Ts (307 aa).

The segment at 80–83 (TDFV) is involved in Mg(2+) ion dislocation from EF-Tu.

It belongs to the EF-Ts family.

The protein resides in the cytoplasm. Associates with the EF-Tu.GDP complex and induces the exchange of GDP to GTP. It remains bound to the aminoacyl-tRNA.EF-Tu.GTP complex up to the GTP hydrolysis stage on the ribosome. In Variovorax paradoxus (strain S110), this protein is Elongation factor Ts.